The chain runs to 139 residues: Small ribosomal subunit protein uS12 (139 aa).

The tract at residues 1 to 44 (MPTINQLVKKPRTSKVKKSTAPALNKGYNSHKKKATDLASPQKR) is disordered. Basic residues predominate over residues 9–18 (KKPRTSKVKK). At D102 the chain carries 3-methylthioaspartic acid.

Belongs to the universal ribosomal protein uS12 family. In terms of assembly, part of the 30S ribosomal subunit. Contacts proteins S8 and S17. May interact with IF1 in the 30S initiation complex.

Its function is as follows. With S4 and S5 plays an important role in translational accuracy. Functionally, interacts with and stabilizes bases of the 16S rRNA that are involved in tRNA selection in the A site and with the mRNA backbone. Located at the interface of the 30S and 50S subunits, it traverses the body of the 30S subunit contacting proteins on the other side and probably holding the rRNA structure together. The combined cluster of proteins S8, S12 and S17 appears to hold together the shoulder and platform of the 30S subunit. The sequence is that of Small ribosomal subunit protein uS12 from Macrococcus caseolyticus (strain JCSC5402) (Macrococcoides caseolyticum).